A 359-amino-acid chain; its full sequence is Phospho-N-acetylmuramoyl-pentapeptide-transferase (359 aa).

10 consecutive transmembrane segments (helical) span residues 3–23 (QILI…PALI), 55–75 (VAII…GLAF), 80–100 (ISAS…VGFL), 117–137 (TAKT…ALGF), 156–176 (IATV…VVSA), 187–207 (LDGL…LITF), 231–251 (LAIV…WNAA), 255–275 (IFMG…ISVT), 280–300 (ILAV…VLQI), and 334–354 (FWLL…GEWL).

Belongs to the glycosyltransferase 4 family. MraY subfamily. It depends on Mg(2+) as a cofactor.

It is found in the cell membrane. It carries out the reaction UDP-N-acetyl-alpha-D-muramoyl-L-alanyl-gamma-D-glutamyl-meso-2,6-diaminopimeloyl-D-alanyl-D-alanine + di-trans,octa-cis-undecaprenyl phosphate = di-trans,octa-cis-undecaprenyl diphospho-N-acetyl-alpha-D-muramoyl-L-alanyl-D-glutamyl-meso-2,6-diaminopimeloyl-D-alanyl-D-alanine + UMP. It functions in the pathway cell wall biogenesis; peptidoglycan biosynthesis. Its function is as follows. Catalyzes the initial step of the lipid cycle reactions in the biosynthesis of the cell wall peptidoglycan: transfers peptidoglycan precursor phospho-MurNAc-pentapeptide from UDP-MurNAc-pentapeptide onto the lipid carrier undecaprenyl phosphate, yielding undecaprenyl-pyrophosphoryl-MurNAc-pentapeptide, known as lipid I. The polypeptide is Phospho-N-acetylmuramoyl-pentapeptide-transferase (Mycolicibacterium paratuberculosis (strain ATCC BAA-968 / K-10) (Mycobacterium paratuberculosis)).